The primary structure comprises 189 residues: Elongation factor P (189 aa).

This sequence belongs to the elongation factor P family.

The protein resides in the cytoplasm. It functions in the pathway protein biosynthesis; polypeptide chain elongation. Involved in peptide bond synthesis. Stimulates efficient translation and peptide-bond synthesis on native or reconstituted 70S ribosomes in vitro. Probably functions indirectly by altering the affinity of the ribosome for aminoacyl-tRNA, thus increasing their reactivity as acceptors for peptidyl transferase. This chain is Elongation factor P, found in Pseudomonas putida (strain ATCC 700007 / DSM 6899 / JCM 31910 / BCRC 17059 / LMG 24140 / F1).